A 343-amino-acid polypeptide reads, in one-letter code: Mas-related G-protein coupled receptor member F (343 aa).

Residues 1 to 44 are Extracellular-facing; that stretch reads MAGNCSWEAHSTNQNKMCPGMSEALELYSRGFLTIEQIATLPPP. Residue N4 is glycosylated (N-linked (GlcNAc...) asparagine). Residues 45 to 66 traverse the membrane as a helical segment; it reads AVTNYIFLLLCLCGLVGNGLVL. Residues 67 to 82 lie on the Cytoplasmic side of the membrane; that stretch reads WFFGFSIKRTPFSIYF. A helical membrane pass occupies residues 83-104; that stretch reads LHLASADGIYLFSKAVIALLNM. The Extracellular portion of the chain corresponds to 105–123; that stretch reads GTFLGSFPDYVRRVSRIVG. Residues 124-144 form a helical membrane-spanning segment; it reads LCTFFAGVSLLPAISIERCVS. Topologically, residues 145–160 are cytoplasmic; it reads VIFPMWYWRRRPKRLS. A helical membrane pass occupies residues 161–181; sequence AGVCALLWLLSFLVTSIHNYF. Residues 182–198 lie on the Extracellular side of the membrane; it reads CMFLGHEASGTACLNMD. A helical transmembrane segment spans residues 199–220; that stretch reads ISLGILLFFLFCPLMVLPCLAL. Over 221–241 the chain is Cytoplasmic; it reads ILHVECRARRRQRSAKLNHVV. Residues 242 to 263 traverse the membrane as a helical segment; it reads LAIVSVFLVSSIYLGIDWFLFW. Topologically, residues 264 to 273 are extracellular; the sequence is VFQIPAPFPE. Residues 274 to 294 traverse the membrane as a helical segment; it reads YVTDLCICINSSAKPIVYFLA. Over 295–343 the chain is Cytoplasmic; the sequence is GRDKSQRLWEPLRVVFQRALRDGAEPGDAASSTPNTVTMEMQCPSGNAS. Residues 318-343 form a disordered region; the sequence is AEPGDAASSTPNTVTMEMQCPSGNAS. Residues 324-343 show a composition bias toward polar residues; it reads ASSTPNTVTMEMQCPSGNAS.

Belongs to the G-protein coupled receptor 1 family. Mas subfamily. As to expression, gut, vas deferens, uterus and aorta; barely detectable in liver, kidney, lung, and salivary gland. In the brain, markedly abundant in the cerebellum.

Its subcellular location is the cell membrane. Its function is as follows. Orphan receptor. May bind to a neuropeptide and may regulate nociceptor function and/or development, including the sensation or modulation of pain. The protein is Mas-related G-protein coupled receptor member F (Mrgprf) of Rattus norvegicus (Rat).